A 129-amino-acid polypeptide reads, in one-letter code: UPF0225 protein XC_4246 (129 aa).

It belongs to the UPF0225 family.

The sequence is that of UPF0225 protein XC_4246 from Xanthomonas campestris pv. campestris (strain 8004).